A 381-amino-acid chain; its full sequence is Acetylornithine deacetylase (381 aa).

A Zn(2+)-binding site is contributed by H79. Residue D81 is part of the active site. D111 lines the Zn(2+) pocket. Residue E143 is part of the active site. E144, E168, and H354 together coordinate Zn(2+).

Belongs to the peptidase M20A family. ArgE subfamily. As to quaternary structure, homodimer. Zn(2+) is required as a cofactor. It depends on Co(2+) as a cofactor. Glutathione serves as cofactor.

It localises to the cytoplasm. The enzyme catalyses N(2)-acetyl-L-ornithine + H2O = L-ornithine + acetate. The protein operates within amino-acid biosynthesis; L-arginine biosynthesis; L-ornithine from N(2)-acetyl-L-ornithine (linear): step 1/1. Functionally, catalyzes the hydrolysis of the amide bond of N(2)-acetylated L-amino acids. Cleaves the acetyl group from N-acetyl-L-ornithine to form L-ornithine, an intermediate in L-arginine biosynthesis pathway, and a branchpoint in the synthesis of polyamines. The chain is Acetylornithine deacetylase from Buchnera aphidicola subsp. Acyrthosiphon pisum (strain Tuc7).